A 263-amino-acid chain; its full sequence is Single-stranded DNA-binding protein WHY1, chloroplastic (263 aa).

The N-terminal 47 residues, 1–47, are a transit peptide targeting the chloroplast; sequence MSQLLSTPLMAVNSNPRFLSSSSVLVTGGFAVKRHGFALKPTTKTVK. Residues 89–94 are required for ssDNA binding; sequence KGKAAL. Residues 167–180 carry the Nuclear localization signal motif; sequence KGKSDEGKVRKVLK.

Belongs to the Whirly family. As to quaternary structure, homotetramer.

The protein localises to the plastid. It localises to the chloroplast. It is found in the nucleus. In terms of biological role, single-stranded DNA-binding protein that functions in both chloroplasts and nucleus. In chloroplasts, maintains plastid genome stability by preventing break-induced and short homology-dependent illegitimate recombinations. In nucleus, modulates telomere length homeostasis by inhibiting the action of the telomerase at the extreme termini of chromosomes. Is recruited to a distal element upstream of the kinesin KP1 to mediate the transcriptional repression of KP1. Is required for full salicylic acid-dependent plant disease resistance responses. Can bind double-stranded DNA in vivo. This Arabidopsis thaliana (Mouse-ear cress) protein is Single-stranded DNA-binding protein WHY1, chloroplastic (WHY1).